We begin with the raw amino-acid sequence, 187 residues long: Ion-translocating oxidoreductase complex subunit B (187 aa).

A hydrophobic region spans residues 1-26; the sequence is MTHILFAVLVLALLALAFGIILGFAA. Positions 32-90 constitute a 4Fe-4S domain; that stretch reads EADPIVDQLDALLPQTQCGQCGYPGCKPYAEALANGDQINKCVPGGDATMRKIADLMGV. [4Fe-4S] cluster is bound by residues C49, C52, C57, C73, C115, C118, C121, C125, C145, C148, C151, and C155. 4Fe-4S ferredoxin-type domains lie at 106–135 and 136–165; these read KVAF…GATK and AMHT…MIPV.

Belongs to the 4Fe4S bacterial-type ferredoxin family. RnfB subfamily. In terms of assembly, the complex is composed of six subunits: RnfA, RnfB, RnfC, RnfD, RnfE and RnfG. Requires [4Fe-4S] cluster as cofactor.

It localises to the cell inner membrane. Part of a membrane-bound complex that couples electron transfer with translocation of ions across the membrane. The sequence is that of Ion-translocating oxidoreductase complex subunit B from Aeromonas hydrophila subsp. hydrophila (strain ATCC 7966 / DSM 30187 / BCRC 13018 / CCUG 14551 / JCM 1027 / KCTC 2358 / NCIMB 9240 / NCTC 8049).